The chain runs to 320 residues: MENRKTFSWLKEQMIRSISVSIMIYVITRTSISNAYPIFAQQGYENPREATGRIVCANCHLANKPVDIEVPQAVLPDTVFEAVLRIPYDMQLKQVLANGKKGGLNVGAVLILPEGFELAPPDRISPELKEKIGNLSFQSYRPNKKNILVIGPVPGKKYSEIVFPILSPDPATKKDVHFLKYPIYVGGNRGRGQIYPDGSKSNNTVYNATSTGIVKKILRKEKGGYEISIVDASDGRQVIDIIPPGPELLFSEGESIKLDQPLTSNPNVGGFGQGDAEIVLQDPLRVQGLLFFFASVILAQVFLVLKKKQFEKVQLYEMNF.

Positions 1–35 (MENRKTFSWLKEQMIRSISVSIMIYVITRTSISNA) are cleaved as a signal peptide. Positions 36, 56, 59, and 60 each coordinate heme. The helical transmembrane segment at 286–305 (VQGLLFFFASVILAQVFLVL) threads the bilayer.

The protein belongs to the cytochrome f family. In terms of assembly, the 4 large subunits of the cytochrome b6-f complex are cytochrome b6, subunit IV (17 kDa polypeptide, petD), cytochrome f and the Rieske protein, while the 4 small subunits are PetG, PetL, PetM and PetN. The complex functions as a dimer. It depends on heme as a cofactor.

It localises to the plastid. Its subcellular location is the chloroplast thylakoid membrane. Component of the cytochrome b6-f complex, which mediates electron transfer between photosystem II (PSII) and photosystem I (PSI), cyclic electron flow around PSI, and state transitions. The sequence is that of Cytochrome f (petA) from Zea mays (Maize).